Here is a 354-residue protein sequence, read N- to C-terminus: Guanine nucleotide-binding protein G(i) subunit alpha-3 (354 aa).

A lipid anchor (N-myristoyl glycine) is attached at Gly2. Cys3 carries S-palmitoyl cysteine lipidation. One can recognise a G-alpha domain in the interval Lys32 to Tyr354. Residues Lys35–Thr48 form a G1 motif region. Residues Gly42, Glu43, Ser44, Gly45, Lys46, Ser47, Thr48, Asp150, Ser151, Leu175, Arg176, Thr177, Arg178, Val179, Lys180, Thr181, Val201, Gly203, Asn269, Lys270, Asp272, Leu273, Cys325, Ala326, and Thr327 each coordinate GTP. Mg(2+) is bound at residue Ser47. Residues Asp173–Thr181 form a G2 motif region. Thr181 contacts Mg(2+). The segment at Phe196–Arg205 is G3 motif. The G4 motif stretch occupies residues Ile265 to Asp272. Positions Thr324–Thr329 are G5 motif.

It belongs to the G-alpha family. G(i/o/t/z) subfamily. As to quaternary structure, heterotrimeric G proteins are composed of 3 units; alpha, beta and gamma. The alpha subunit contains the guanine nucleotide binding site. GTP binding causes dissociation of the heterotrimer, liberating the individual subunits so that they can interact with downstream effector proteins. Forms a complex with CCDC88A/GIV and EGFR which leads to enhanced EGFR signaling and triggering of cell migration; ligand stimulation is required for recruitment of GNAI3 to the complex. Interacts (inactive GDP-bound form) with CCDC88A/GIV (via GBA motif); the interaction leads to activation of GNAI3. Interacts (inactive GDP-bound form) with CCDC88C/DAPLE (via GBA motif); the interaction leads to activation of GNAI3. Interacts (inactive GDP-bound form) with NUCB1 (via GBA motif) and NUCB2 (via GBA motif); the interaction leads to activation of GNAI3. Interacts (inactive GDP-bound form) with PLCD4 (via GBA motif); the interaction leads to activation of GNAI3. Interacts with INSR; the interaction is probably mediated by CCDC88A/GIV. Interacts with GPSM1. Interacts (GDP-bound form) with GPSM2 (via GoLoco domains). Does not interact with RGS2. Interacts with RGS8 and RGS10; this strongly enhances the intrinsic GTPase activity. Interacts with RGS16; this strongly enhances the intrinsic GTPase activity. Interacts with RGS12. Interacts (via active GTP- or inactive GDP-bound form) with RGS14. Interacts (via active GTP-bound form) with TRPC5 (via ANK repeats) in a homotetrameric ion channel; the interaction is direct and activates the channel activity.

The protein localises to the cytoplasm. It localises to the cell membrane. It is found in the cytoskeleton. Its subcellular location is the microtubule organizing center. The protein resides in the centrosome. Heterotrimeric guanine nucleotide-binding proteins (G proteins) function as transducers downstream of G protein-coupled receptors (GPCRs) in numerous signaling cascades. The alpha chain contains the guanine nucleotide binding site and alternates between an active, GTP-bound state and an inactive, GDP-bound state. Signaling by an activated GPCR promotes GDP release and GTP binding. The alpha subunit has a low GTPase activity that converts bound GTP to GDP, thereby terminating the signal. Both GDP release and GTP hydrolysis are modulated by numerous regulatory proteins. Signaling is mediated via effector proteins, such as adenylate cyclase. Inhibits adenylate cyclase activity, leading to decreased intracellular cAMP levels. Stimulates the activity of receptor-regulated K(+) channels. The active GTP-bound form prevents the association of RGS14 with centrosomes and is required for the translocation of RGS14 from the cytoplasm to the plasma membrane. May play a role in cell division. The active GTP-bound form activates the calcium permeant TRPC5 ion channels. The chain is Guanine nucleotide-binding protein G(i) subunit alpha-3 (Gnai3) from Mus musculus (Mouse).